The primary structure comprises 840 residues: DNA mismatch repair protein MutS (840 aa).

601–608 (GPNMSGKS) contacts ATP.

It belongs to the DNA mismatch repair MutS family.

In terms of biological role, this protein is involved in the repair of mismatches in DNA. It is possible that it carries out the mismatch recognition step. This protein has a weak ATPase activity. The protein is DNA mismatch repair protein MutS of Lactococcus lactis subsp. cremoris (strain SK11).